Reading from the N-terminus, the 246-residue chain is 1-(5-phosphoribosyl)-5-[(5-phosphoribosylamino)methylideneamino] imidazole-4-carboxamide isomerase (246 aa).

The active-site Proton acceptor is the D8. The active-site Proton donor is the D131.

The protein belongs to the HisA/HisF family.

Its subcellular location is the cytoplasm. It catalyses the reaction 1-(5-phospho-beta-D-ribosyl)-5-[(5-phospho-beta-D-ribosylamino)methylideneamino]imidazole-4-carboxamide = 5-[(5-phospho-1-deoxy-D-ribulos-1-ylimino)methylamino]-1-(5-phospho-beta-D-ribosyl)imidazole-4-carboxamide. The protein operates within amino-acid biosynthesis; L-histidine biosynthesis; L-histidine from 5-phospho-alpha-D-ribose 1-diphosphate: step 4/9. In Bordetella bronchiseptica (strain ATCC BAA-588 / NCTC 13252 / RB50) (Alcaligenes bronchisepticus), this protein is 1-(5-phosphoribosyl)-5-[(5-phosphoribosylamino)methylideneamino] imidazole-4-carboxamide isomerase.